Reading from the N-terminus, the 355-residue chain is MFTLSDFDFNLPPELIAQTALPERTASRLLEVDHTVEPARLVDRNFVELPSCIAPGDLLVFNDTRVLKARFFGQKASGGKIEVLIERVTGTHTALAQIRASKSPGTGTTLRLADAFDVTVGERVEPFFTLHFPQPCLTLIEQHGRLPLPPYIEHDADANDETRYQTVYASNPGAVAAPTAGLHFDLPLLEQLDAMGVERATLTLHVGAGTFQPVRVENIAEHRMHSEWYDLPQSLVDKIAATRARGGNVIAVGTTSMRALEAAARSADEAGRPLAATQAETDIFITPGYRFRVVDRLVTNFHLPKSTLLMLVSAFAGVETIRAAYRHAIDERYRFFSYGDAMLLTRRDTPEAPQA.

The protein belongs to the QueA family. Monomer.

It is found in the cytoplasm. It catalyses the reaction 7-aminomethyl-7-carbaguanosine(34) in tRNA + S-adenosyl-L-methionine = epoxyqueuosine(34) in tRNA + adenine + L-methionine + 2 H(+). It functions in the pathway tRNA modification; tRNA-queuosine biosynthesis. In terms of biological role, transfers and isomerizes the ribose moiety from AdoMet to the 7-aminomethyl group of 7-deazaguanine (preQ1-tRNA) to give epoxyqueuosine (oQ-tRNA). The polypeptide is S-adenosylmethionine:tRNA ribosyltransferase-isomerase (Burkholderia ambifaria (strain ATCC BAA-244 / DSM 16087 / CCUG 44356 / LMG 19182 / AMMD) (Burkholderia cepacia (strain AMMD))).